Consider the following 351-residue polypeptide: Histidinol-phosphate aminotransferase (351 aa).

Lysine 221 carries the N6-(pyridoxal phosphate)lysine modification.

It belongs to the class-II pyridoxal-phosphate-dependent aminotransferase family. Histidinol-phosphate aminotransferase subfamily. In terms of assembly, homodimer. Pyridoxal 5'-phosphate is required as a cofactor.

The catalysed reaction is L-histidinol phosphate + 2-oxoglutarate = 3-(imidazol-4-yl)-2-oxopropyl phosphate + L-glutamate. It participates in amino-acid biosynthesis; L-histidine biosynthesis; L-histidine from 5-phospho-alpha-D-ribose 1-diphosphate: step 7/9. The chain is Histidinol-phosphate aminotransferase from Staphylococcus saprophyticus subsp. saprophyticus (strain ATCC 15305 / DSM 20229 / NCIMB 8711 / NCTC 7292 / S-41).